A 357-amino-acid chain; its full sequence is Methylthioribose-1-phosphate isomerase (357 aa).

Substrate contacts are provided by residues arginine 49–alanine 51, arginine 89, and glutamine 197. Residue aspartate 238 is the Proton donor of the active site. Asparagine 248–lysine 249 serves as a coordination point for substrate.

It belongs to the eIF-2B alpha/beta/delta subunits family. MtnA subfamily.

It catalyses the reaction 5-(methylsulfanyl)-alpha-D-ribose 1-phosphate = 5-(methylsulfanyl)-D-ribulose 1-phosphate. The protein operates within amino-acid biosynthesis; L-methionine biosynthesis via salvage pathway; L-methionine from S-methyl-5-thio-alpha-D-ribose 1-phosphate: step 1/6. Its function is as follows. Catalyzes the interconversion of methylthioribose-1-phosphate (MTR-1-P) into methylthioribulose-1-phosphate (MTRu-1-P). The chain is Methylthioribose-1-phosphate isomerase from Leptospira biflexa serovar Patoc (strain Patoc 1 / Ames).